Here is a 122-residue protein sequence, read N- to C-terminus: Large ribosomal subunit protein uL14 (122 aa).

Belongs to the universal ribosomal protein uL14 family. Part of the 50S ribosomal subunit. Forms a cluster with proteins L3 and L19. In the 70S ribosome, L14 and L19 interact and together make contacts with the 16S rRNA in bridges B5 and B8.

In terms of biological role, binds to 23S rRNA. Forms part of two intersubunit bridges in the 70S ribosome. The polypeptide is Large ribosomal subunit protein uL14 (Desulfotalea psychrophila (strain LSv54 / DSM 12343)).